The primary structure comprises 106 residues: uncharacterized protein (106 aa).

Positions 24–35 (ANSISSTSFYHK) are enriched in polar residues. Disordered stretches follow at residues 24 to 49 (ANSISSTSFYHKSSNNNSHANASCEE) and 65 to 87 (LTAESSNHHSLSASNQPASSSDE). 2 stretches are compositionally biased toward low complexity: residues 36-46 (SSNNNSHANAS) and 74-85 (SLSASNQPASSS).

This is an uncharacterized protein from Arabidopsis thaliana (Mouse-ear cress).